The sequence spans 1454 residues: Beta-1,3-glucan-binding protein (1454 aa).

Residues 1–197 (MSFDLTTPFD…KRSLEMRMMN (197 aa)) constitute a propeptide that is removed on maturation. N-linked (GlcNAc...) asparagine glycosylation is found at Asn33, Asn55, Asn185, Asn571, Asn592, Asn825, Asn882, and Asn1153.

This sequence belongs to the glycosyl hydrolase 16 family. As to quaternary structure, monomer. As to expression, expressed in the hepatopancreas and secreted into the hemolymph. Expressed at lower levels in muscle, pleopod and gill tissue.

The protein resides in the secreted. In terms of biological role, involved in the recognition of invading microorganisms. Binds specifically to beta-1,3-glucan and activates the prophenoloxidase cascade. The polypeptide is Beta-1,3-glucan-binding protein (Penaeus vannamei (Whiteleg shrimp)).